A 284-amino-acid chain; its full sequence is Nucleotide-binding protein CPS_4546 (284 aa).

Residue 8–15 (GRSGSGKS) coordinates ATP. 56-59 (DVRN) contacts GTP.

The protein belongs to the RapZ-like family.

In terms of biological role, displays ATPase and GTPase activities. This is Nucleotide-binding protein CPS_4546 from Colwellia psychrerythraea (strain 34H / ATCC BAA-681) (Vibrio psychroerythus).